Reading from the N-terminus, the 100-residue chain is Co-chaperonin GroES (100 aa).

This sequence belongs to the GroES chaperonin family. In terms of assembly, heptamer of 7 subunits arranged in a ring. Interacts with the chaperonin GroEL.

The protein localises to the cytoplasm. Functionally, together with the chaperonin GroEL, plays an essential role in assisting protein folding. The GroEL-GroES system forms a nano-cage that allows encapsulation of the non-native substrate proteins and provides a physical environment optimized to promote and accelerate protein folding. GroES binds to the apical surface of the GroEL ring, thereby capping the opening of the GroEL channel. In Mycobacterium tuberculosis (strain CDC 1551 / Oshkosh), this protein is Co-chaperonin GroES.